The primary structure comprises 529 residues: MSEQEGNQSEHQSEHVGESEGKLPNETPTTSQSTNASTGTAGKGEKKSSDGDPAAANPATKLTPSMAESLLELNPALRSELAGMDKEKATEALRQMNISDLLTGLSVNPKNQKDMASFKFWQTQPVIRFDDRESESPDGPIKIVELDQVSREPIPLVDGFEWVTLDIDDEADVKEFYELLANHYVEDGSAMFRFNYSPAFLNWALKAPGWKREWHVGVRASKSGKLVASICGVPAEIAVRGKSLKVTEINFLCVHKKLRSKRLTPVLIKEITRRCYLNGIYQAIYTVGIMLPTPVSACRYYHRALDWLKLHEVGFSPLPIGSTKSRQVTRNHLPGHTSTPGLRPMQSKDIDAVQDLLNRYLKRFDLSQIFSRKEVDHLLLHKEKPGAEQIVWSYVAEEPGTHRITDFAAFYSLESSVLQNSKHKNVKAAYLYYYATETAFAEKEKGLKERLLMLINDVLILAKKERFDVMNALTLHDNPLFLEQLKFGAGDGQLHYYLFNYRTAPIAGGVNDKNLPDERKRGGVGVILV.

Residues 1–10 (MSEQEGNQSE) are compositionally biased toward polar residues. The interval 1-65 (MSEQEGNQSE…ANPATKLTPS (65 aa)) is disordered. Residues 11-23 (HQSEHVGESEGKL) are compositionally biased toward basic and acidic residues. Over residues 26-40 (ETPTTSQSTNASTGT) the composition is skewed to polar residues. Residues 118–121 (FKFW), 252–254 (LCV), and 260–264 (SKRLT) contribute to the tetradecanoyl-CoA site. The active-site Proton acceptor; via carboxylate is the V529.

Belongs to the NMT family. As to quaternary structure, monomer.

Its subcellular location is the cytoplasm. The enzyme catalyses N-terminal glycyl-[protein] + tetradecanoyl-CoA = N-tetradecanoylglycyl-[protein] + CoA + H(+). Adds a myristoyl group to the N-terminal glycine residue of certain cellular proteins. The polypeptide is Glycylpeptide N-tetradecanoyltransferase (Ajellomyces capsulatus (Darling's disease fungus)).